Here is a 224-residue protein sequence, read N- to C-terminus: Ethylene-inducing xylanase 5 (224 aa).

An N-terminal signal peptide occupies residues 1–16 (MLKSLVVLLLTSRVIA). Residues 32–218 (QATPNSQGTH…SSGFAEMTVA (187 aa)) form the GH11 domain. Residue Asn88 is glycosylated (N-linked (GlcNAc...) asparagine). The active-site Nucleophile is Glu117. Catalysis depends on Glu205, which acts as the Proton donor.

This sequence belongs to the glycosyl hydrolase 11 (cellulase G) family.

It carries out the reaction Endohydrolysis of (1-&gt;4)-beta-D-xylosidic linkages in xylans.. The protein operates within glycan degradation; xylan degradation. In terms of biological role, endo-1,4-beta-xylanase involved in the hydrolysis of xylan, a major structural heterogeneous polysaccharide found in plant biomass representing the second most abundant polysaccharide in the biosphere, after cellulose. May act as an elicitor of plant defense responses in certain plants but does not exhibit any cell death when transiently expressed in N.benthamiana. The chain is Ethylene-inducing xylanase 5 from Verticillium dahliae (strain VdLs.17 / ATCC MYA-4575 / FGSC 10137) (Verticillium wilt).